Reading from the N-terminus, the 241-residue chain is Uridylate kinase (241 aa).

Residue 12 to 15 (KVSG) participates in ATP binding. Residues 20–25 (GEKGTG) are involved in allosteric activation by GTP. G54 serves as a coordination point for UMP. Positions 55 and 59 each coordinate ATP. UMP-binding positions include D74 and 135 to 142 (TGNPYFST). ATP is bound by residues N163, Y169, and D172.

It belongs to the UMP kinase family. As to quaternary structure, homohexamer.

The protein localises to the cytoplasm. The catalysed reaction is UMP + ATP = UDP + ADP. It functions in the pathway pyrimidine metabolism; CTP biosynthesis via de novo pathway; UDP from UMP (UMPK route): step 1/1. With respect to regulation, allosterically activated by GTP. Inhibited by UTP. Functionally, catalyzes the reversible phosphorylation of UMP to UDP. This is Uridylate kinase from Lactobacillus johnsonii (strain CNCM I-12250 / La1 / NCC 533).